Reading from the N-terminus, the 209-residue chain is Redox-sensing transcriptional repressor Rex (209 aa).

Positions 16–55 form a DNA-binding region, H-T-H motif; the sequence is LYYRFIQNLSLSGKQRVSSAELSEAVKVDSATIRRDFSYF. 90–95 contributes to the NAD(+) binding site; the sequence is GVGNLG.

It belongs to the transcriptional regulatory Rex family. Homodimer.

It is found in the cytoplasm. Functionally, modulates transcription in response to changes in cellular NADH/NAD(+) redox state. This Bacillus cereus (strain AH187) protein is Redox-sensing transcriptional repressor Rex.